We begin with the raw amino-acid sequence, 66 residues long: U10-theraphotoxin-Cg1a 2 (66 aa).

A signal peptide spans Met1–Ala21. The propeptide occupies Ala22–Arg29. 3 cysteine pairs are disulfide-bonded: Cys31–Cys46, Cys38–Cys51, and Cys45–Cys58.

This sequence belongs to the neurotoxin 10 (Hwtx-1) family. 29 (Jztx-13) subfamily. Expressed by the venom gland.

It is found in the secreted. Functionally, probable ion channel inhibitor. This is U10-theraphotoxin-Cg1a 2 from Chilobrachys guangxiensis (Chinese earth tiger tarantula).